Reading from the N-terminus, the 776-residue chain is Acetone carboxylase alpha subunit (776 aa).

Heterohexamer of two alpha, two beta and two gamma subunits. Requires Fe cation as cofactor. The cofactor is Mg(2+). It depends on Zn(2+) as a cofactor. The N-terminus is blocked.

It catalyses the reaction acetone + hydrogencarbonate + 2 ATP + 3 H2O = acetoacetate + 2 AMP + 4 phosphate + 4 H(+). In terms of biological role, catalyzes the carboxylation of acetone to form acetoacetate. Has a reduced activity on butanone, and no activity on 2-pentatone, 3-pentatone, 2-hexanone, chloroacetone, pyruvate, phosphoenolpyruvate, acetaldehyde, propionaldehyde and propylene oxide. In Xanthobacter autotrophicus (strain ATCC BAA-1158 / Py2), this protein is Acetone carboxylase alpha subunit.